Consider the following 262-residue polypeptide: Thiazole synthase (262 aa).

Lysine 96 (schiff-base intermediate with DXP) is an active-site residue. Residues glycine 157, 184-185 (AG), and 206-207 (NT) each bind 1-deoxy-D-xylulose 5-phosphate.

Belongs to the ThiG family. As to quaternary structure, homotetramer. Forms heterodimers with either ThiH or ThiS.

Its subcellular location is the cytoplasm. The enzyme catalyses [ThiS sulfur-carrier protein]-C-terminal-Gly-aminoethanethioate + 2-iminoacetate + 1-deoxy-D-xylulose 5-phosphate = [ThiS sulfur-carrier protein]-C-terminal Gly-Gly + 2-[(2R,5Z)-2-carboxy-4-methylthiazol-5(2H)-ylidene]ethyl phosphate + 2 H2O + H(+). The protein operates within cofactor biosynthesis; thiamine diphosphate biosynthesis. In terms of biological role, catalyzes the rearrangement of 1-deoxy-D-xylulose 5-phosphate (DXP) to produce the thiazole phosphate moiety of thiamine. Sulfur is provided by the thiocarboxylate moiety of the carrier protein ThiS. In vitro, sulfur can be provided by H(2)S. The chain is Thiazole synthase from Legionella pneumophila (strain Corby).